The chain runs to 184 residues: Peptide deformylase (184 aa).

Fe cation-binding residues include Cys-99 and His-141. Glu-142 is an active-site residue. His-145 contacts Fe cation.

It belongs to the polypeptide deformylase family. Requires Fe(2+) as cofactor.

The enzyme catalyses N-terminal N-formyl-L-methionyl-[peptide] + H2O = N-terminal L-methionyl-[peptide] + formate. Removes the formyl group from the N-terminal Met of newly synthesized proteins. Requires at least a dipeptide for an efficient rate of reaction. N-terminal L-methionine is a prerequisite for activity but the enzyme has broad specificity at other positions. The polypeptide is Peptide deformylase (Chlamydia abortus (strain DSM 27085 / S26/3) (Chlamydophila abortus)).